Here is a 477-residue protein sequence, read N- to C-terminus: Tyrosine--tRNA ligase, mitochondrial (477 aa).

The N-terminal 16 residues, methionine 1–glycine 16, are a transit peptide targeting the mitochondrion. Position 77 (tyrosine 77) interacts with L-tyrosine. Aspartate 81 is an ATP binding site. The 'HIGH' region motif lies at proline 82–histidine 91. Residues aspartate 121, tyrosine 221, glutamine 225, and aspartate 228 each coordinate L-tyrosine. An ATP-binding site is contributed by glycine 244–aspartate 246. L-tyrosine is bound at residue glutamine 247. 2 residues coordinate ATP: isoleucine 274 and lysine 284. Residues lysine 281–serine 285 carry the 'KMSKS' region motif. An N6-acetyllysine mark is found at lysine 355 and lysine 367.

The protein belongs to the class-I aminoacyl-tRNA synthetase family. Homodimer.

Its subcellular location is the mitochondrion matrix. It catalyses the reaction tRNA(Tyr) + L-tyrosine + ATP = L-tyrosyl-tRNA(Tyr) + AMP + diphosphate + H(+). Catalyzes the attachment of tyrosine to tRNA(Tyr) in a two-step reaction: tyrosine is first activated by ATP to form Tyr-AMP and then transferred to the acceptor end of tRNA(Tyr). The chain is Tyrosine--tRNA ligase, mitochondrial (YARS2) from Homo sapiens (Human).